The chain runs to 414 residues: Serine/threonine transporter SstT (414 aa).

8 helical membrane-spanning segments follow: residues 16 to 36 (GSLV…AWIS), 46 to 66 (LGTL…LMLV), 84 to 104 (ILFL…VFSF), 143 to 163 (ALLN…GFAL), 180 to 200 (AVTF…FGLV), 219 to 239 (LVVL…LLVF), 300 to 320 (MAGA…TLGV), and 332 to 352 (VVAS…LLLI).

It belongs to the dicarboxylate/amino acid:cation symporter (DAACS) (TC 2.A.23) family.

It localises to the cell inner membrane. It catalyses the reaction L-serine(in) + Na(+)(in) = L-serine(out) + Na(+)(out). It carries out the reaction L-threonine(in) + Na(+)(in) = L-threonine(out) + Na(+)(out). In terms of biological role, involved in the import of serine and threonine into the cell, with the concomitant import of sodium (symport system). In Salmonella schwarzengrund (strain CVM19633), this protein is Serine/threonine transporter SstT.